We begin with the raw amino-acid sequence, 292 residues long: Nitrogenase iron protein (292 aa).

G8–S15 lines the ATP pocket. Residue C96 participates in [4Fe-4S] cluster binding. ADP-ribosylarginine; by dinitrogenase reductase ADP-ribosyltransferase is present on R99. Residue C130 coordinates [4Fe-4S] cluster.

It belongs to the NifH/BchL/ChlL family. As to quaternary structure, homodimer. Requires [4Fe-4S] cluster as cofactor. The reversible ADP-ribosylation of Arg-99 inactivates the nitrogenase reductase and regulates nitrogenase activity.

It catalyses the reaction N2 + 8 reduced [2Fe-2S]-[ferredoxin] + 16 ATP + 16 H2O = H2 + 8 oxidized [2Fe-2S]-[ferredoxin] + 2 NH4(+) + 16 ADP + 16 phosphate + 6 H(+). In terms of biological role, the key enzymatic reactions in nitrogen fixation are catalyzed by the nitrogenase complex, which has 2 components: the iron protein and the molybdenum-iron protein. This is Nitrogenase iron protein from Synechococcus sp. (strain JA-3-3Ab) (Cyanobacteria bacterium Yellowstone A-Prime).